An 87-amino-acid polypeptide reads, in one-letter code: U3-theraphotoxin-Hhn1c (87 aa).

A signal peptide spans 1-24; the sequence is MVNMKASMFLTFAGLVLLFVVCHA. The propeptide occupies 25–52; sequence SESEEKEFPKEMLSSIFAVDDDFKQEER. Intrachain disulfides connect Cys-54/Cys-67, Cys-61/Cys-72, and Cys-66/Cys-79.

This sequence belongs to the neurotoxin 10 (Hwtx-1) family. 51 (Hntx-8) subfamily. Hntx-8 sub-subfamily. Expressed by the venom gland.

It localises to the secreted. Its function is as follows. Ion channel inhibitor. In Cyriopagopus hainanus (Chinese bird spider), this protein is U3-theraphotoxin-Hhn1c.